The sequence spans 667 residues: MAIVQTLPVPLEPAPEAATAQQAPAMGSVSSLISGRPCPGGPAPPRHHGPPGPTFFRQQDGLLRGGYEAQEPLCPAVPPRKAVPGTNFTYINEDFRTESPPSPSSDLEDAREQRARNAHLRGPPPKLIPVSGKLEKNMEKIVIRPTAFKPVLPKPRGVPSLPSFLGPRATGPSGSQGSLTQLFGGPASSSSSSSSSAADKPLILSGWASGCPSGTLSDSGRNSLSSLPTYSTGGAEPATNSPGGHLPSHGPGRGALPGPARGAPTGPSHSDSGRSSSSKSTGSLGGRLAGGLLGSGPRASPDSSSCGERSPPPPPPPPPPSDEALLHCVLEGKLRDREAELQQLRDSLDESEVTMCQVYEERQRHWPREREALREDGVARAQRAQQLLQLQVFQLQQEKRQLQDDFAQLLQEREQLERRCAAFEREQRELGPRLEETKWEVCQKSGEISLLKQQLKESQSELVQKGSELVALRVALREARAALRVSEGRARGLQEAARTRELELEACSQELQRHRQEAERLREKAGQLDSEAAGLREPPVPPATADPFLLAESDEAKAQRAAAGVGGSLRAQVERLRAELQRERRQGEEQRDSFEGERLAWQAEKEQVIRYQKQLQHNYIQMYRRNRQLEQELQQLSLELEARELADLGLAEPAPCICLEEITATEI.

A compositionally biased stretch (low complexity) spans 1 to 25; sequence MAIVQTLPVPLEPAPEAATAQQAPA. Disordered stretches follow at residues 1–132, 150–325, and 516–541; these read MAIV…PVSG, PVLP…DEAL, and QEAE…PPVP. The segment at 1–333 is required for centrosomal localization; that stretch reads MAIVQTLPVP…ALLHCVLEGK (333 aa). A compositionally biased stretch (polar residues) spans 172 to 181; it reads PSGSQGSLTQ. The span at 187–198 shows a compositional bias: low complexity; sequence ASSSSSSSSSAA. Residues 212–232 are compositionally biased toward polar residues; sequence PSGTLSDSGRNSLSSLPTYST. Low complexity predominate over residues 241–282; sequence SPGGHLPSHGPGRGALPGPARGAPTGPSHSDSGRSSSSKSTG. A Phosphoserine modification is found at Ser-248. Positions 283–294 are enriched in gly residues; that stretch reads SLGGRLAGGLLG. Phosphoserine is present on Ser-295. Pro residues predominate over residues 310–321; sequence SPPPPPPPPPPS. A coiled-coil region spans residues 329–647; sequence VLEGKLRDRE…LELEARELAD (319 aa). Residues 445-667 form a sufficient for interaction with CTNNB1 region; it reads SGEISLLKQQ…CLEEITATEI (223 aa). Residues 448-667 are sufficient for interaction with KATNB1 and for inhibition of katanin-mediated microtubule severing; the sequence is ISLLKQQLKE…CLEEITATEI (220 aa). Residues 516 to 526 are compositionally biased toward basic and acidic residues; that stretch reads QEAERLREKAG. A Phosphoserine modification is found at Ser-568. The Nuclear export signal signature appears at 629-638; the sequence is LEQELQQLSL.

It belongs to the LZTS2 family. In terms of assembly, interacts with KATNB1. Also interacts with CTNNB1, gamma-tubulin and KIF23.

The protein resides in the cytoplasm. It is found in the cytoskeleton. The protein localises to the microtubule organizing center. Its subcellular location is the centrosome. In terms of biological role, negative regulator of katanin-mediated microtubule severing and release from the centrosome. Required for central spindle formation and the completion of cytokinesis. May negatively regulate axonal outgrowth by preventing the formation of microtubule bundles that are necessary for transport within the elongating axon. Negative regulator of the Wnt signaling pathway. Represses beta-catenin-mediated transcriptional activation by promoting the nuclear exclusion of beta-catenin. This Bos taurus (Bovine) protein is Leucine zipper putative tumor suppressor 2.